The chain runs to 468 residues: Probable Xaa-Pro aminopeptidase pepP (468 aa).

Residues Asp265, Asp276, Glu399, and Glu439 each coordinate Mn(2+).

The protein belongs to the peptidase M24B family. Mn(2+) is required as a cofactor.

It catalyses the reaction Release of any N-terminal amino acid, including proline, that is linked to proline, even from a dipeptide or tripeptide.. Functionally, catalyzes the removal of a penultimate prolyl residue from the N-termini of peptides. This is Probable Xaa-Pro aminopeptidase pepP (pepP) from Aspergillus fumigatus (strain CBS 144.89 / FGSC A1163 / CEA10) (Neosartorya fumigata).